The primary structure comprises 150 residues: Aspartate 1-decarboxylase (150 aa).

The Schiff-base intermediate with substrate; via pyruvic acid role is filled by S25. At S25 the chain carries Pyruvic acid (Ser). Position 57 (T57) interacts with substrate. Y58 acts as the Proton donor in catalysis. 73–75 (GAA) provides a ligand contact to substrate.

The protein belongs to the PanD family. Heterooctamer of four alpha and four beta subunits. Pyruvate is required as a cofactor. Post-translationally, is synthesized initially as an inactive proenzyme, which is activated by self-cleavage at a specific serine bond to produce a beta-subunit with a hydroxyl group at its C-terminus and an alpha-subunit with a pyruvoyl group at its N-terminus.

It localises to the cytoplasm. It carries out the reaction L-aspartate + H(+) = beta-alanine + CO2. It participates in cofactor biosynthesis; (R)-pantothenate biosynthesis; beta-alanine from L-aspartate: step 1/1. In terms of biological role, catalyzes the pyruvoyl-dependent decarboxylation of aspartate to produce beta-alanine. In Kocuria rhizophila (strain ATCC 9341 / DSM 348 / NBRC 103217 / DC2201), this protein is Aspartate 1-decarboxylase.